The following is a 298-amino-acid chain: Inosose dehydratase (298 aa).

Belongs to the IolE/MocC family. It depends on glutathione as a cofactor. Co(2+) is required as a cofactor. Requires Mn(2+) as cofactor.

It catalyses the reaction scyllo-inosose = 3D-3,5/4-trihydroxycyclohexane-1,2-dione + H2O. Its pathway is polyol metabolism; myo-inositol degradation into acetyl-CoA; acetyl-CoA from myo-inositol: step 2/7. Functionally, catalyzes the dehydration of inosose (2-keto-myo-inositol, 2KMI or 2,4,6/3,5-pentahydroxycyclohexanone) to 3D-(3,5/4)-trihydroxycyclohexane-1,2-dione (D-2,3-diketo-4-deoxy-epi-inositol). This Geobacillus thermodenitrificans (strain NG80-2) protein is Inosose dehydratase.